The chain runs to 1180 residues: Tudor domain-containing protein 1 (1180 aa).

Disordered stretches follow at residues 1-66 (MSVK…KKNN) and 79-138 (SQED…RPAK). Basic and acidic residues predominate over residues 27–41 (NFEKNENKLPPHESL). Composition is skewed to polar residues over residues 79-91 (SQEDNSVSSNPNG) and 110-122 (NSVSPPSAESNSP). Residues Cys-170, Cys-173, Cys-181, Cys-184, Cys-190, Cys-194, His-202, and Cys-206 each contribute to the Zn(2+) site. The MYND-type zinc finger occupies 170 to 206 (CHRCGLFGSLRCSQCKQTYYCSTACQRRDWSAHSIVC). A Tudor 1 domain is found at 312-372 (IPVKGEVCIA…YHLNRNIDLF (61 aa)). The interval 450–469 (SGQDSKKENADQSDPEDVGK) is disordered. Tudor domains follow at residues 541 to 600 (YPAI…LLEL), 762 to 821 (KAEI…FLNL), and 990 to 1048 (RPRI…HLAL).

It belongs to the TDRD1 family. As to quaternary structure, found in a mRNP complex, at least composed of TDRD1, TDRD6, TDRD7 and DDX4. Interacts with MAEL. Interacts with PIWIL1, PIWIL2 and PIWIL4 (when methylated on arginine residues). Interacts with TDRD12. In terms of tissue distribution, testis and ovary specific. Also expressed in several cancers.

The protein localises to the cytoplasm. Plays a central role during spermatogenesis by participating in the repression transposable elements and preventing their mobilization, which is essential for the germline integrity. Acts via the piRNA metabolic process, which mediates the repression of transposable elements during meiosis by forming complexes composed of piRNAs and Piwi proteins and governs the methylation and subsequent repression of transposons. Required for the localization of Piwi proteins to the meiotic nuage. Involved in the piRNA metabolic process by ensuring the entry of correct transcripts into the normal piRNA pool and limiting the entry of cellular transcripts into the piRNA pathway. May act by allowing the recruitment of piRNA biogenesis or loading factors that ensure the correct entry of transcripts and piRNAs into Piwi proteins. In Homo sapiens (Human), this protein is Tudor domain-containing protein 1 (TDRD1).